A 190-amino-acid chain; its full sequence is Peptidoglycan recognition protein 1 (190 aa).

The first 21 residues, 1-21, serve as a signal peptide directing secretion; it reads MSRRYTPLAWVLLALLGLGAA. A Pyrrolidone carboxylic acid modification is found at Q22. 3 disulfides stabilise this stretch: C24–C148, C40–C85, and C61–C67. Residues 46–174 enclose the N-acetylmuramoyl-L-alanine amidase domain; the sequence is QPVRYVVVSH…RDVQQTLSPG (129 aa).

This sequence belongs to the N-acetylmuramoyl-L-alanine amidase 2 family. In terms of assembly, homodimer; disulfide-linked.

It localises to the secreted. The protein resides in the cytoplasmic granule. Innate immunity protein that plays several important functions in antimicrobial and antitumor defense systems. Acts as a pattern receptor that binds to murein peptidoglycans (PGN) of Gram-positive bacteria and thus provides bactericidal activity. Forms an equimolar complex with heat shock protein HSPA1A and induces programmed cell death through apoptosis and necroptosis in tumor cell lines by activating the TNFR1 receptor on the target cell membrane. In addition, acts in complex with the Ca(2+)-binding protein S100A4 as a chemoattractant able to induce lymphocyte movement. Mechanistically, this complex acts as a ligand of the chemotactic receptors CCR5 and CXCR3 which are present on the cells of the immune system. Promotes also the activation of lymphocytes that become able to kill virus-infected cells as well as tumor cells by modulating the spectrum of their target-cell specificity. Induction of cytotoxicity on monocyte surface requires interaction with TREM1 receptor. The sequence is that of Peptidoglycan recognition protein 1 (PGLYRP1) from Bos indicus (Zebu).